An 87-amino-acid polypeptide reads, in one-letter code: Probable acyl carrier protein PigG (87 aa).

The Carrier domain occupies 1–78 (MLESKLINHI…SMVALVQRLK (78 aa)). O-(pantetheine 4'-phosphoryl)serine is present on Ser36.

It functions in the pathway antibiotic biosynthesis; prodigiosin biosynthesis. In terms of biological role, involved in the biosynthesis of 4-methoxy-2,2'-bipyrrole-5-carbaldehyde (MBC), one of the terminal products involved in the biosynthesis of the red antibiotic prodigiosin (Pig). Carrier of the L-prolyl group transferred from L-prolyl-AMP by PigI. The protein is Probable acyl carrier protein PigG of Serratia sp. (strain ATCC 39006) (Prodigiosinella confusarubida).